A 253-amino-acid polypeptide reads, in one-letter code: MNSFLGLLKKDIKLSRMWLLVWICGIIFLLGTGHIIASRTKEPLVIFGFFVAVAFFLLFLSPVFVFYHLRKEGKSQLWLYNPNGGLWLFSSKLAASLLYQFVIQLALTAYGIWMYHMLSVKNLLEHQVDITSTVALLNMYGLISSLDMSVTVIVFWTVFHSLRNWRGMRWAAMVLLVAMWLFFDEYIISPLVESQKHFWPVTVYCNFDFHFHNVWRLELKPIHLSVLGFPIAIVITFLLLIMASKLLDRKVEV.

A run of 6 helical transmembrane segments spans residues 17 to 37 (MWLLVWICGIIFLLGTGHIIA), 46 to 66 (IFGFFVAVAFFLLFLSPVFVF), 93 to 113 (LAASLLYQFVIQLALTAYGIW), 139 to 159 (MYGLISSLDMSVTVIVFWTVF), 172 to 192 (AMVLLVAMWLFFDEYIISPLV), and 222 to 242 (IHLSVLGFPIAIVITFLLLIM).

It localises to the cell membrane. This is an uncharacterized protein from Bacillus subtilis (strain 168).